Here is a 271-residue protein sequence, read N- to C-terminus: 2-aminophenol 1,6-dioxygenase subunit alpha (271 aa).

It belongs to the LigB/MhpB extradiol dioxygenase family. In terms of assembly, the APD complex is a heterotetramer of 2 alpha (CnbCa) and 2 beta (CnbCb) subunits.

It participates in xenobiotic degradation; nitrobenzene degradation. It functions in the pathway xenobiotic degradation; 4-chloronitrobenzene degradation. In terms of biological role, component of the 2-aminophenol 1,6-dioxygenase (APD) complex that catalyzes the ring fission of 2-aminophenol to produce 2-aminomuconic semialdehyde. CnbCa may have a role in the stability of the complex. The complex is also active on other substrates such as 2-amino-5-chlorophenol (68% activity), protocatechuate (33% activity) and catechol (5% activity). Both 2-aminophenol and 2-amino-5-cholorophenol are likely native substrates for this dioxygenase which is involved in the reductive degradation pathway of both nitrobenzene (NB) and 4-chloronitrobenzene (4-CNB), allowing C.testosteroni strain CNB-1 to grow on these compounds as sole source of carbon, nitrogen, and energy. The chain is 2-aminophenol 1,6-dioxygenase subunit alpha from Comamonas testosteroni (Pseudomonas testosteroni).